The sequence spans 288 residues: Purine nucleoside phosphorylase (288 aa).

Phosphate is bound at residue 65–66; it reads RN. Met201 contributes to the substrate binding site. Thr202 is a binding site for phosphate.

It belongs to the PNP/MTAP phosphorylase family. MTAP subfamily. In terms of assembly, homotrimer.

Its subcellular location is the cytoplasm. The protein resides in the nucleus. The catalysed reaction is a purine D-ribonucleoside + phosphate = a purine nucleobase + alpha-D-ribose 1-phosphate. The protein operates within purine metabolism; purine nucleoside salvage. In terms of biological role, purine nucleoside phosphorylase involved in purine salvage. The polypeptide is Purine nucleoside phosphorylase (Drosophila pseudoobscura pseudoobscura (Fruit fly)).